We begin with the raw amino-acid sequence, 237 residues long: Demethylmenaquinone methyltransferase (237 aa).

S-adenosyl-L-methionine-binding positions include Thr-58, Asp-79, and 107-108; that span reads NA.

Belongs to the class I-like SAM-binding methyltransferase superfamily. MenG/UbiE family.

It catalyses the reaction a 2-demethylmenaquinol + S-adenosyl-L-methionine = a menaquinol + S-adenosyl-L-homocysteine + H(+). It participates in quinol/quinone metabolism; menaquinone biosynthesis; menaquinol from 1,4-dihydroxy-2-naphthoate: step 2/2. Functionally, methyltransferase required for the conversion of demethylmenaquinol (DMKH2) to menaquinol (MKH2). The sequence is that of Demethylmenaquinone methyltransferase from Lactiplantibacillus plantarum (strain ATCC BAA-793 / NCIMB 8826 / WCFS1) (Lactobacillus plantarum).